An 89-amino-acid chain; its full sequence is Small ribosomal subunit protein uS15 (89 aa).

It belongs to the universal ribosomal protein uS15 family. In terms of assembly, part of the 30S ribosomal subunit. Forms a bridge to the 50S subunit in the 70S ribosome, contacting the 23S rRNA.

In terms of biological role, one of the primary rRNA binding proteins, it binds directly to 16S rRNA where it helps nucleate assembly of the platform of the 30S subunit by binding and bridging several RNA helices of the 16S rRNA. Functionally, forms an intersubunit bridge (bridge B4) with the 23S rRNA of the 50S subunit in the ribosome. The polypeptide is Small ribosomal subunit protein uS15 (Corynebacterium glutamicum (strain R)).